We begin with the raw amino-acid sequence, 237 residues long: Phosphoribosylaminoimidazole-succinocarboxamide synthase (237 aa).

The protein belongs to the SAICAR synthetase family.

It carries out the reaction 5-amino-1-(5-phospho-D-ribosyl)imidazole-4-carboxylate + L-aspartate + ATP = (2S)-2-[5-amino-1-(5-phospho-beta-D-ribosyl)imidazole-4-carboxamido]succinate + ADP + phosphate + 2 H(+). It participates in purine metabolism; IMP biosynthesis via de novo pathway; 5-amino-1-(5-phospho-D-ribosyl)imidazole-4-carboxamide from 5-amino-1-(5-phospho-D-ribosyl)imidazole-4-carboxylate: step 1/2. The protein is Phosphoribosylaminoimidazole-succinocarboxamide synthase of Idiomarina loihiensis (strain ATCC BAA-735 / DSM 15497 / L2-TR).